Consider the following 218-residue polypeptide: Probable nicotinate-nucleotide adenylyltransferase (218 aa).

Belongs to the NadD family.

The enzyme catalyses nicotinate beta-D-ribonucleotide + ATP + H(+) = deamido-NAD(+) + diphosphate. Its pathway is cofactor biosynthesis; NAD(+) biosynthesis; deamido-NAD(+) from nicotinate D-ribonucleotide: step 1/1. Its function is as follows. Catalyzes the reversible adenylation of nicotinate mononucleotide (NaMN) to nicotinic acid adenine dinucleotide (NaAD). The sequence is that of Probable nicotinate-nucleotide adenylyltransferase from Helicobacter hepaticus (strain ATCC 51449 / 3B1).